The primary structure comprises 1091 residues: ATP-dependent RNA helicase ddx54 (1091 aa).

2 disordered regions span residues 1 to 63 (MVKP…KEEF) and 150 to 231 (DNSN…KTGG). Residues 26 to 35 (MKGKKLETKS) are compositionally biased toward basic and acidic residues. Residues 150-161 (DNSNFDNNGDQF) are compositionally biased toward polar residues. Residues 196–207 (KKEEIESSEKFE) are compositionally biased toward basic and acidic residues. Residues 230 to 258 (GGFQSMDLTKNLLKAILKKGFNVPTPIQR) carry the Q motif motif. Positions 261–433 (IPMILDGHDI…RAGLNNPKLI (173 aa)) constitute a Helicase ATP-binding domain. 274–281 (ARTGSGKT) contacts ATP. The DEAD box motif lies at 381–384 (DEAD). One can recognise a Helicase C-terminal domain in the interval 478 to 632 (TETTTTTTTN…KFQYEGQTIN (155 aa)). 2 disordered regions span residues 801 to 896 (EEML…TPEN) and 933 to 1091 (KRKG…KSRK). The segment covering 814 to 823 (DNNKDIKMNE) has biased composition (basic and acidic residues). Positions 824–855 (NDDENDDDDEEGENDDDEEEENEKDEDDEEDE) are enriched in acidic residues. Composition is skewed to basic and acidic residues over residues 865-874 (ESSDKNDNNK), 944-975 (DADR…EEWK), and 1008-1019 (QGREKEKKDNKA). The span at 1020-1029 (SHAKGSHGLK) shows a compositional bias: basic residues. Positions 1031–1052 (RPSELKDKNQISKNRSEKERKM) are enriched in basic and acidic residues. Residues 1068–1079 (SGGGGGGKGSKF) are compositionally biased toward gly residues.

It belongs to the DEAD box helicase family. DDX54/DBP10 subfamily.

Its subcellular location is the nucleus. The protein localises to the nucleolus. The catalysed reaction is ATP + H2O = ADP + phosphate + H(+). In terms of biological role, ATP-binding RNA helicase which may be involved in the ribosome biogenesis. The chain is ATP-dependent RNA helicase ddx54 (helA) from Dictyostelium discoideum (Social amoeba).